A 264-amino-acid chain; its full sequence is Osteopontin (264 aa).

The first 16 residues, 1 to 16, serve as a signal peptide directing secretion; it reads MKLAFLCLCFISIAAA. Disordered regions lie at residues 21-141 and 166-264; these read KSRQ…RGDS and IEDD…EVTR. Residues 31-51 show a composition bias toward basic and acidic residues; that stretch reads SEEKYDPRSHHTHRYHQDHVD. Positions 52-73 are enriched in polar residues; sequence SQSQEHLQQTQNDLASLQQTHY. Over residues 97-118 the composition is skewed to acidic residues; the sequence is AVDDDDDDDNDSNDTDESDEVV. 2 N-linked (GlcNAc...) asparagine glycosylation sites follow: N106 and N109. The short motif at 132 to 134 is the Cell attachment site element; the sequence is RGD. Residues 186-212 show a composition bias toward basic and acidic residues; the sequence is KESREQDSRELAQHQSVENDSRPRFDS. 2 N-linked (GlcNAc...) asparagine glycosylation sites follow: N204 and N242. Residues 233 to 246 show a composition bias toward polar residues; sequence ASRSAVDTSNQTLE. Residues 252–264 show a composition bias toward basic and acidic residues; it reads EDRHSIENNEVTR.

This sequence belongs to the osteopontin family. In terms of processing, extensively phosphorylated on serine residues.

Its subcellular location is the secreted. Functionally, major non-collagenous bone protein that binds tightly to hydroxyapatite. Appears to form an integral part of the mineralized matrix. Probably important to cell-matrix interaction. Its function is as follows. Acts as a cytokine involved in enhancing production of interferon-gamma and interleukin-12 and reducing production of interleukin-10 and is essential in the pathway that leads to type I immunity. The polypeptide is Osteopontin (SPP1) (Gallus gallus (Chicken)).